A 523-amino-acid polypeptide reads, in one-letter code: UDP-N-acetylmuramyl-tripeptide synthetase (523 aa).

S38 serves as a coordination point for UDP-N-acetyl-alpha-D-muramoyl-L-alanyl-D-glutamate. 116-122 (GTKGKTT) provides a ligand contact to ATP. Residues 162–163 (TT), S189, and R197 contribute to the UDP-N-acetyl-alpha-D-muramoyl-L-alanyl-D-glutamate site. K231 carries the post-translational modification N6-carboxylysine.

It belongs to the MurCDEF family. MurE subfamily. In terms of processing, carboxylation is probably crucial for Mg(2+) binding and, consequently, for the gamma-phosphate positioning of ATP.

It is found in the cytoplasm. It functions in the pathway cell wall biogenesis; peptidoglycan biosynthesis. Its function is as follows. Catalyzes the addition of an amino acid to the nucleotide precursor UDP-N-acetylmuramoyl-L-alanyl-D-glutamate (UMAG) in the biosynthesis of bacterial cell-wall peptidoglycan. The protein is UDP-N-acetylmuramyl-tripeptide synthetase of Lactobacillus acidophilus (strain ATCC 700396 / NCK56 / N2 / NCFM).